The sequence spans 479 residues: MARDERGVTAQSEDFAAWYNEVVFKAGLVDRGPAKGTMVIRPYGYRLWELLQSELDRRIKDTGHENAYFPLLIPESYLGREAEHVEGFSPELAVVTHVGGKVLEEPLVVRPTSETIIGEMMAKWISSHRDLPLLLNQWANVVRWELRPRMFLRTTEFLWQEGHTAHVDEASARRETMLALDIYHEVARELAAIPVVPGEKTPGERFAGAVATYTIEGMMRDGRALQSGTSHYMGIKFASAFDIRFTSETGREELCHTTSWGMSTRMIGGIVMTHGDDKGLVFPPRLAPHQVVIVPITRGGNVAVEGAADELAHRLRSVGVRTHVDARPHLTPGFKYNEWEMRGVPVRLELGPRDLEDGTVMMVKRLGDDGKQAVPIDSLPEAMPGVLDDFQAFLLARATAFRDGHARTVDNWTDFADAVSTGWALALHCGIAACEEEIKSLTAATPRCVPLGGEPETGVCVRCGAASAYGKRVIFGRAY.

This sequence belongs to the class-II aminoacyl-tRNA synthetase family. ProS type 3 subfamily. In terms of assembly, homodimer.

It is found in the cytoplasm. The catalysed reaction is tRNA(Pro) + L-proline + ATP = L-prolyl-tRNA(Pro) + AMP + diphosphate. Catalyzes the attachment of proline to tRNA(Pro) in a two-step reaction: proline is first activated by ATP to form Pro-AMP and then transferred to the acceptor end of tRNA(Pro). The sequence is that of Proline--tRNA ligase 2 from Rhodococcus jostii (strain RHA1).